A 193-amino-acid polypeptide reads, in one-letter code: MLLSDRDIRAAHAEGHISLDPWTDEMVQPASIDVRLDRFFRLFNNHAYTYVDPAENQGELTEQFEVGPDEPWILHPGEFALGSTWEYVKIDETLAARLEGKSSLGRLGILTHSTAGFIDPGFEGHITLELSNVSTLPVKLWPGMKIGQMCFFQLSSPSEHPYGSETTGSHYQGQRGPTPSRSYQNFYRAQITD.

Residues 101-106 (KSSLGR), D119, 127-129 (TLE), Q148, Y162, and Q174 contribute to the dCTP site. The Proton donor/acceptor role is filled by E129. The interval 161–184 (PYGSETTGSHYQGQRGPTPSRSYQ) is disordered.

Belongs to the dCTP deaminase family. In terms of assembly, homotrimer.

The enzyme catalyses dCTP + 2 H2O = dUMP + NH4(+) + diphosphate. Its pathway is pyrimidine metabolism; dUMP biosynthesis; dUMP from dCTP: step 1/1. Bifunctional enzyme that catalyzes both the deamination of dCTP to dUTP and the hydrolysis of dUTP to dUMP without releasing the toxic dUTP intermediate. The protein is dCTP deaminase, dUMP-forming of Bifidobacterium animalis subsp. lactis (strain AD011).